We begin with the raw amino-acid sequence, 88 residues long: Protein WIR1A (88 aa).

At 1–13 the chain is on the cytoplasmic side; sequence MASLGSSAGGRRP. A helical transmembrane segment spans residues 14 to 35; sequence TVLLQIALFVVVAAIIINSSVC. Topologically, residues 36 to 88 are extracellular; it reads LGATAVHDAAASGTGALDPNVPAVPTPGGAGQPYTGRGCRTVYGCRPPAGGQP.

It is found in the membrane. Its function is as follows. Associated with pathogen defense. The chain is Protein WIR1A (WIR1A) from Triticum aestivum (Wheat).